We begin with the raw amino-acid sequence, 369 residues long: Putative cyclin-F1-1 (369 aa).

The tract at residues alanine 328–aspartate 350 is disordered.

Belongs to the cyclin family. Cyclin F subfamily.

The sequence is that of Putative cyclin-F1-1 (CYCF1-1) from Oryza sativa subsp. japonica (Rice).